The following is a 465-amino-acid chain: WASH complex subunit 1 (465 aa).

Residues 1-54 (MTPVRMQHSLAGQTYAVPFIQPDLRREEAVQQMADALQYLQKVSGDIFSRISQQ) are required for WASH complex assembly. The interval 1 to 167 (MTPVRMQHSL…EGLGGLPSNI (167 aa)) is WHD1. Residue lysine 220 forms a Glycyl lysine isopeptide (Lys-Gly) (interchain with G-Cter in ubiquitin) linkage. 3 disordered regions span residues 297-359 (QDGV…VDPS), 376-407 (GKAKLRSMKERKLEKQQQKEQEQVRATSQGGH), and 423-465 (ISGK…DWES). A compositionally biased stretch (pro residues) spans 302–314 (TPPPPPPPPPPAP). The interval 349 to 465 (QGAPREVVDP…AEEDEDDWES (117 aa)) is VCA. The 23-residue stretch at 361–383 (GWATLLESIRQAGGIGKAKLRSM) folds into the WH2 domain. Basic and acidic residues predominate over residues 382–398 (SMKERKLEKQQQKEQEQ). Residues 424–436 (SGKGPGAGEGPGG) show a composition bias toward gly residues. Over residues 456–465 (AEEDEDDWES) the composition is skewed to acidic residues.

This sequence belongs to the WASH1 family. As to quaternary structure, component of the WASH core complex also described as WASH regulatory complex (SHRC) composed of WASH (WASHC1, WASH2P or WASH3P), WASHC2 (WASHC2A or WASHC2C), WASHC3, WASHC4 and WASHC5. The WASH core complex associates via WASHC2 with the F-actin-capping protein dimer (formed by CAPZA1, CAPZA2 or CAPZA3 and CAPZB) in a transient or substoichiometric manner which was initially described as WASH complex. Interacts (via WHD1 region) with WASHC2C; the interaction is direct. Interacts with VPS35; mediates the association with the retromer CSC complex. Interacts with FKBP15. Interacts with alpha-tubulin. Interacts with BECN1; this interaction can be competed out by AMBRA1 binding. Interacts with BLOC1S2; may associate with the BLOC-1 complex. Interacts with tubulin gamma chain (TUBG1 or TUBG2). Interacts with EXOC1, EXOC4, EXOC8; in MMP14-positive endosomes in breast tumor cells; indicative for an association with the exocyst complex. Interacts with TBC1D23. Ubiquitinated at Lys-220 via 'Lys-63'-linked ubiquitin chains by the TRIM27:MAGEL2 E3 ubiquitin ligase complex, leading to promote endosomal F-actin assembly.

It localises to the early endosome membrane. The protein resides in the recycling endosome membrane. Its subcellular location is the late endosome. It is found in the cytoplasmic vesicle. The protein localises to the autophagosome. It localises to the cytoplasm. The protein resides in the cytoskeleton. Its subcellular location is the microtubule organizing center. It is found in the centrosome. The protein localises to the centriole. Functionally, acts as a component of the WASH core complex that functions as a nucleation-promoting factor (NPF) at the surface of endosomes, where it recruits and activates the Arp2/3 complex to induce actin polymerization, playing a key role in the fission of tubules that serve as transport intermediates during endosome sorting. Involved in endocytic trafficking of EGF. Involved in transferrin receptor recycling. Regulates the trafficking of endosomal alpha5beta1 integrin to the plasma membrane and involved in invasive cell migration. In T-cells involved in endosome-to-membrane recycling of receptors including T-cell receptor (TCR), CD28 and ITGAL; proposed to be implicated in T cell proliferation and effector function. In dendritic cells involved in endosome-to-membrane recycling of major histocompatibility complex (MHC) class II probably involving retromer and subsequently allowing antigen sampling, loading and presentation during T-cell activation. Involved in Arp2/3 complex-dependent actin assembly driving Salmonella typhimurium invasion independent of ruffling. Involved in the exocytosis of MMP14 leading to matrix remodeling during invasive migration and implicating late endosome-to-plasma membrane tubular connections and cooperation with the exocyst complex. Involved in negative regulation of autophagy independently from its role in endosomal sorting by inhibiting BECN1 ubiquitination to inactivate PIK3C3/Vps34 activity. The polypeptide is WASH complex subunit 1 (Homo sapiens (Human)).